The primary structure comprises 1211 residues: MAGAGSQHHPQGVAGGAVAGASAVSPTAAGPGEDSSDSEAEQEGPQKLIRKVSTSGQMRTKTSIKEGQLLKQTSSFQRWKKRYFKLRGRTLYYAKDSKSLIFDEVDLSDASVAEASTKNANNSFTIITPFRRLMLCAENRKEMEVWISSLKSVQSREPYEVAQFNVEHFSGMHNWYACSHARPTFCNVCRESLSGVTSHGLSCEVCKFKAHKRCAVRATNNCKWTTLASIGKDIIEDEDGVAMPHQWLEGNLPVSAKCAVCDKTCGSVLRLQDWKCLWCKTMVHTACKDVYHPVCPLGQCKVSIIPPIALNSTDSDGFCRATFSFCVSPLLVFVNSKSGDNQGVKFLRRFKQLLNPAQVFDLMNGGPYLGLRLFQKFDNFRILVCGGDGSVGWVLSEIDKLNLHKQCQLGVLPLGTGNDLARVLGWGGSYDDDTQLPQILEKLERASTKMLDRWSIMTYELKLPAKSSLLPEPVAATEEFYMTIYEDSVANHLTKIVNSDEHAVVISSAKILCETVKDFVAKVEKAQDRTLENTVVAEAVASKCSVLNEKLEQLLQALHADSQASRVPPGIGPAIPEEDTVESASDESLGESKDQLVNDIGKPSSQKAVKPREIMLRANSLKKAVRQVIEEAEKVMDEPAVQPSEPVSPSCDYDTETDEAKEDDAKESLSAKTTSQSPDAQASCGHPQTDSVAGPAMATTKENLPVLNTRIICPGLRAGLAASIAGSSIINKMLLANIDPFGATPFIDPDLDSLDGYSEKCVMNNYFGIGLDAKISLEFNNKREEHPEKCRSRTKNLMWYGVLGTRELLQRSYKNLEQRVQLECDGQYIPLPSLQGIAVLNIPSYAGGTNFWGGTKEDDIFAAPSFDDKILEVVAVFDSVQMAVSRVIKLQHHRIAQCRTVKITIFGDEGVPVQVDGEAWVQPPGIIKIVHKNRAQMLTRDRAFESTLKSWEDKQKCDSGKPVLRTNLYIHPAPDLATEEVSQMRLCSQAAEELITRICDAATIHCLLEQELAHAVNACSHALNKANPRFPESLTRDTATEIAINVKALYNETEALLVGRVPLHLESPHEERVSSALHSVEMELQKLTEIPWLYYILRPSEDEEPPLDCTKRNNKSTVFRIVPKFKKEKAQKQKTSSQPVQNWGTEEVAAWLDLLNLGEYKEIFIRHDVRGAELLHLERRDLKDLGIPKVGHMKRILQGIKELERNPPNLV.

Residues 1 to 66 (MAGAGSQHHP…QMRTKTSIKE (66 aa)) are disordered. A compositionally biased stretch (low complexity) spans 19–32 (AGASAVSPTAAGPG). Residues 52-61 (VSTSGQMRTK) are compositionally biased toward polar residues. The 94-residue stretch at 62–155 (TSIKEGQLLK…WISSLKSVQS (94 aa)) folds into the PH domain. Phorbol-ester/DAG-type zinc fingers lie at residues 172-222 (MHNW…TNNC) and 244-295 (PHQW…HPVC). The 136-residue stretch at 325–460 (FCVSPLLVFV…LDRWSIMTYE (136 aa)) folds into the DAGKc domain. Disordered regions lie at residues 562–613 (SQAS…KPRE) and 634–694 (KVMD…SVAG). Composition is skewed to acidic residues over residues 576–589 (PEED…DESL) and 653–662 (YDTETDEAKE). Residues 670–691 (SAKTTSQSPDAQASCGHPQTDS) are compositionally biased toward polar residues. The 64-residue stretch at 1143-1206 (WGTEEVAAWL…LQGIKELERN (64 aa)) folds into the SAM domain.

This sequence belongs to the eukaryotic diacylglycerol kinase family. As to quaternary structure, interacts with RAF1 and BRAF. Homooligomers. Heterooligomers. Oligomerization through the SAM domain inhibits the diacylglycerol kinase activity. Heterooligomerizes with SAM domain-containing isoforms of DGKD. In terms of assembly, does not form homooligomers. In terms of processing, phosphorylated. Phosphorylation does not inhibit catalytic activity. As to expression, widely expressed. Detected in the granulosa cells of the primary and secondary follicles. Expressed in mature follicles and corpus lutea. Expressed in the oviductal epithelium. In the uterus, strongly expressed in the luminal epithelium. Detected in the uterine glands. Detected in ovary and uterus (at protein level). In terms of tissue distribution, specifically expressed in testis. Detected in the inner area of the testis. Strongly expressed in the secondary spermatocytes and the round spermatids and weakly detected in the primary spermatocytes.

It is found in the cytoplasm. Its subcellular location is the cell membrane. It localises to the cytoskeleton. The catalysed reaction is a 1,2-diacyl-sn-glycerol + ATP = a 1,2-diacyl-sn-glycero-3-phosphate + ADP + H(+). It catalyses the reaction 1,2-di-(9Z-octadecenoyl)-sn-glycerol + ATP = 1,2-di-(9Z-octadecenoyl)-sn-glycero-3-phosphate + ADP + H(+). It participates in lipid metabolism; glycerolipid metabolism. Functionally, diacylglycerol kinase that converts diacylglycerol/DAG into phosphatidic acid/phosphatidate/PA and regulates the respective levels of these two bioactive lipids. Thereby, acts as a central switch between the signaling pathways activated by these second messengers with different cellular targets and opposite effects in numerous biological processes. Plays a key role in promoting cell growth. Activates the Ras/B-Raf/C-Raf/MEK/ERK signaling pathway induced by EGF. Regulates the recruitment of RAF1 and BRAF from cytoplasm to membranes and their heterodimerization. The protein is Diacylglycerol kinase eta of Mus musculus (Mouse).